The primary structure comprises 28 residues: Humanin-like 2 (28 aa).

The protein belongs to the humanin family. In terms of tissue distribution, highly expressed in testis. Also expressed in kidney, heart, skeletal muscles and brain.

The protein resides in the secreted. It localises to the cytoplasm. Plays a role as a neuroprotective and antiapoptotic factor. This chain is Humanin-like 2, found in Homo sapiens (Human).